We begin with the raw amino-acid sequence, 552 residues long: Solute carrier family 22 member 6-B (552 aa).

Over 1-16 (MAFQEILESLGGMGRY) the chain is Cytoplasmic. A helical transmembrane segment spans residues 17–37 (QVIHVVLLSLPVFMLASHNLM). Over 38–137 (QNFTAATPSH…LVCNHRRMRQ (100 aa)) the chain is Extracellular. The chain crosses the membrane as a helical span at residues 138–158 (VAQSIYMAGVLVGSILFGGLS). The Cytoplasmic portion of the chain corresponds to 159–164 (DKFGRR). The chain crosses the membrane as a helical span at residues 165–184 (PLNIWSNLQMFVTGICAAFS). Pro185 is a topological domain (extracellular). The chain crosses the membrane as a helical span at residues 186–206 (NYIWYCIFRFLTGVAFSGIVL). Residues 207-225 (NSYSLTVEWIPTGNRAFTS) are Cytoplasmic-facing. The chain crosses the membrane as a helical span at residues 226 to 246 (TATGYCYTMGQLVLVGLAFII). Over 247 to 250 (RDWQ) the chain is Extracellular. Residues 251–271 (WLQLAASIPFFFYFLYSWWIP) form a helical membrane-spanning segment. Residues 272–336 (ESGRWLVLSG…YSALDLVRTP (65 aa)) lie on the Cytoplasmic side of the membrane. A helical membrane pass occupies residues 337–356 (VVRRISFCISCTWFSTSFAY). A topological domain (extracellular) is located at residue Tyr357. A helical transmembrane segment spans residues 358 to 378 (GLALDLQSFGVSIYIIQIIFG). At 379-398 (TVDIPAKFISYFITTYVGRR) the chain is on the cytoplasmic side. A helical membrane pass occupies residues 399–419 (VSQAITLILAGIAILVNISVP). Topologically, residues 420–426 (QDFQTVR) are extracellular. Residues 427–447 (TAMAVFGKGCLAASFNCLYLY) form a helical membrane-spanning segment. At 448 to 459 (TGELYPTVIRQT) the chain is on the cytoplasmic side. Residues 460-480 (GMGLGAMMARLGGIIAPLAQM) traverse the membrane as a helical segment. The Extracellular segment spans residues 481-487 (TGDIYHS). A helical membrane pass occupies residues 488-508 (LPLIIFGCLPILSGIAGCFLP). Over 509–552 (ETLGVPLPETIEEVESPDKQQKDVNVSAKIPLKETELYNMKTDV) the chain is Cytoplasmic.

It belongs to the major facilitator (TC 2.A.1) superfamily. Organic cation transporter (TC 2.A.1.19) family. In terms of processing, glycosylated. Glycosylation is necessary for proper targeting of the transporter to the plasma membrane.

The protein localises to the cell membrane. The protein resides in the basolateral cell membrane. It localises to the basal cell membrane. Involved in the renal elimination of endogenous and exogenous organic anions. Mediates the sodium-independent uptake of p-aminohippurate (PAH), cidofovir, adefovir, 9-(2-phosphonylmethoxyethyl) guanine (PMEG), 9-(2-phosphonylmethoxyethyl) diaminopurine (PMEDAP) and edaravone sulfate. PAH uptake is inhibited by furosemide, steviol, phorbol 12-myristate 13-acetate (PMA), calcium ionophore A23187, benzylpenicillin, furosemide, indomethacin, bumetamide, losartan, probenecid, phenol red, urate, and alpha-ketoglutarate. This Xenopus laevis (African clawed frog) protein is Solute carrier family 22 member 6-B (slc22a6-b).